The following is a 389-amino-acid chain: Serpin-Z3 (389 aa).

The interval 337 to 361 is RCL; that stretch reads GTEAAAVSVAIMMPQCLMRNPDFVA.

It belongs to the serpin family.

In terms of biological role, probable serine protease inhibitor. This Arabidopsis thaliana (Mouse-ear cress) protein is Serpin-Z3.